Reading from the N-terminus, the 318-residue chain is Acetylglutamate kinase (318 aa).

Substrate is bound by residues 80–81, arginine 102, and asparagine 203; that span reads GG.

It belongs to the acetylglutamate kinase family. ArgB subfamily.

It is found in the cytoplasm. The enzyme catalyses N-acetyl-L-glutamate + ATP = N-acetyl-L-glutamyl 5-phosphate + ADP. Its pathway is amino-acid biosynthesis; L-arginine biosynthesis; N(2)-acetyl-L-ornithine from L-glutamate: step 2/4. Its function is as follows. Catalyzes the ATP-dependent phosphorylation of N-acetyl-L-glutamate. This Bifidobacterium adolescentis (strain ATCC 15703 / DSM 20083 / NCTC 11814 / E194a) protein is Acetylglutamate kinase.